We begin with the raw amino-acid sequence, 291 residues long: Protease HtpX homolog (291 aa).

2 helical membrane-spanning segments follow: residues 4-24 and 38-58; these read IALFLITNLAVMAVLGITASL and LGALLGFAMVMGFGGAFISLL. A Zn(2+)-binding site is contributed by His144. The active site involves Glu145. His148 serves as a coordination point for Zn(2+). A run of 2 helical transmembrane segments spans residues 159–179 and 197–217; these read LIQGVMNTFVVFLSRAIGYFI and VTTVVLDLLLGLVAAMIVAWF. Glu222 contacts Zn(2+).

It belongs to the peptidase M48B family. The cofactor is Zn(2+).

It localises to the cell inner membrane. This Leptothrix cholodnii (strain ATCC 51168 / LMG 8142 / SP-6) (Leptothrix discophora (strain SP-6)) protein is Protease HtpX homolog.